A 112-amino-acid polypeptide reads, in one-letter code: MKKIEAIIKPFKLDEVKEALQEVGLQGITVTEAKGFGRQKGHAELYRGAEYIVDFLPKVKIEIVIGDDLVERAIDAIRRAAQTGRIGDGKIFVSNIEEAIRIRTGESGLDAI.

Tyrosine 51 bears the O-UMP-tyrosine mark.

Belongs to the P(II) protein family. As to quaternary structure, homotrimer.

Its function is as follows. In nitrogen-limiting conditions, when the ratio of Gln to 2-ketoglutarate decreases, P-II is uridylylated to P-II-UMP. P-II-UMP allows the deadenylation of glutamine synthetase (GS), thus activating the enzyme. Conversely, in nitrogen excess P-II is deuridylated and promotes the adenylation of GS. P-II indirectly controls the transcription of the GS gene (glnA). P-II prevents NR-II-catalyzed conversion of NR-I to NR-I-phosphate, the transcriptional activator of glnA. When P-II is uridylylated to P-II-UMP, these events are reversed. The polypeptide is Nitrogen regulatory protein P-II (glnB) (Bradyrhizobium diazoefficiens (strain JCM 10833 / BCRC 13528 / IAM 13628 / NBRC 14792 / USDA 110)).